A 125-amino-acid polypeptide reads, in one-letter code: ATP synthase epsilon chain (125 aa).

This sequence belongs to the ATPase epsilon chain family. F-type ATPases have 2 components, CF(1) - the catalytic core - and CF(0) - the membrane proton channel. CF(1) has five subunits: alpha(3), beta(3), gamma(1), delta(1), epsilon(1). CF(0) has three main subunits: a, b and c.

The protein resides in the cell inner membrane. Produces ATP from ADP in the presence of a proton gradient across the membrane. This Aliarcobacter butzleri (strain RM4018) (Arcobacter butzleri) protein is ATP synthase epsilon chain.